A 145-amino-acid polypeptide reads, in one-letter code: uncharacterized protein (145 aa).

The region spanning 78-145 (KLQIVAKDRI…DVVEKISILW (68 aa)) is the ACT domain.

This is an uncharacterized protein from Methanocaldococcus jannaschii (strain ATCC 43067 / DSM 2661 / JAL-1 / JCM 10045 / NBRC 100440) (Methanococcus jannaschii).